Here is a 506-residue protein sequence, read N- to C-terminus: Squalene monooxygenase 1,1 (506 aa).

Transmembrane regions (helical) follow at residues 3 to 23 (LAFP…WTVF) and 47 to 67 (DADV…YALA). Residues 57 to 58 (VG), 77 to 78 (ER), arginine 85, phenylalanine 90, arginine 157, valine 173, aspartate 336, and methionine 349 contribute to the FAD site. A helical transmembrane segment spans residues 447 to 467 (LIFHLCGITLSSIGQLLSPFP).

The protein belongs to the squalene monooxygenase family. FAD serves as cofactor.

The protein localises to the membrane. The enzyme catalyses squalene + reduced [NADPH--hemoprotein reductase] + O2 = (S)-2,3-epoxysqualene + oxidized [NADPH--hemoprotein reductase] + H2O + H(+). It participates in terpene metabolism; lanosterol biosynthesis; lanosterol from farnesyl diphosphate: step 2/3. Its function is as follows. Catalyzes the stereospecific oxidation of squalene to (S)-2,3-epoxysqualene, and is considered to be a rate-limiting enzyme in steroid biosynthesis. This is Squalene monooxygenase 1,1 (SQP1,1) from Brassica napus (Rape).